We begin with the raw amino-acid sequence, 412 residues long: Argininosuccinate synthase (412 aa).

ATP-binding positions include 24–32 and Ala50; that span reads AFSGGLDTS. Tyr103 and Ser108 together coordinate L-citrulline. Position 132 (Gly132) interacts with ATP. Positions 134, 138, and 139 each coordinate L-aspartate. Asn138 serves as a coordination point for L-citrulline. Arg142 serves as a coordination point for L-citrulline.

Belongs to the argininosuccinate synthase family. Type 1 subfamily. In terms of assembly, homotetramer.

The protein resides in the cytoplasm. The enzyme catalyses L-citrulline + L-aspartate + ATP = 2-(N(omega)-L-arginino)succinate + AMP + diphosphate + H(+). The protein operates within amino-acid biosynthesis; L-arginine biosynthesis; L-arginine from L-ornithine and carbamoyl phosphate: step 2/3. The polypeptide is Argininosuccinate synthase (Xanthomonas axonopodis pv. citri (strain 306)).